The sequence spans 437 residues: ATP-dependent protease ATPase subunit HslU (437 aa).

ATP-binding positions include Val18, 60-65 (GVGKTE), Asp249, Glu315, and Arg387.

The protein belongs to the ClpX chaperone family. HslU subfamily. A double ring-shaped homohexamer of HslV is capped on each side by a ring-shaped HslU homohexamer. The assembly of the HslU/HslV complex is dependent on binding of ATP.

Its subcellular location is the cytoplasm. Its function is as follows. ATPase subunit of a proteasome-like degradation complex; this subunit has chaperone activity. The binding of ATP and its subsequent hydrolysis by HslU are essential for unfolding of protein substrates subsequently hydrolyzed by HslV. HslU recognizes the N-terminal part of its protein substrates and unfolds these before they are guided to HslV for hydrolysis. This Rhodospirillum centenum (strain ATCC 51521 / SW) protein is ATP-dependent protease ATPase subunit HslU.